A 1060-amino-acid polypeptide reads, in one-letter code: Carbamoyl phosphate synthase large chain (1060 aa).

The segment at 1 to 400 (MPRDESINKV…SLNKAIRSLD (400 aa)) is carboxyphosphate synthetic domain. ATP is bound by residues arginine 127, arginine 167, glycine 173, glycine 174, glutamine 206, valine 208, glutamate 213, glycine 240, isoleucine 241, histidine 242, glutamine 283, and glutamate 297. The ATP-grasp 1 domain occupies 131–326 (DSFMKKLNEP…IAKIAAKIAV (196 aa)). 3 residues coordinate Mg(2+): glutamine 283, glutamate 297, and asparagine 299. The Mn(2+) site is built by glutamine 283, glutamate 297, and asparagine 299. Residues 401–539 (IGADGFTETP…YGCYDLEDEV (139 aa)) form an oligomerization domain region. Residues 540 to 926 (EVSDRRKVLI…YKSQLSASMD (387 aa)) are carbamoyl phosphate synthetic domain. In terms of domain architecture, ATP-grasp 2 spans 664–858 (TEVLNKLGIP…LAKMAARLMM (195 aa)). 10 residues coordinate ATP: arginine 700, lysine 739, leucine 741, glutamate 746, glycine 771, valine 772, histidine 773, serine 774, glutamine 814, and glutamate 829. Mg(2+) contacts are provided by glutamine 814, glutamate 829, and asparagine 831. Glutamine 814, glutamate 829, and asparagine 831 together coordinate Mn(2+). In terms of domain architecture, MGS-like spans 925–1060 (MDLLNEGKVF…VKSLDEYHGM (136 aa)). The allosteric domain stretch occupies residues 927-1060 (LLNEGKVFIS…VKSLDEYHGM (134 aa)).

Belongs to the CarB family. In terms of assembly, composed of two chains; the small (or glutamine) chain promotes the hydrolysis of glutamine to ammonia, which is used by the large (or ammonia) chain to synthesize carbamoyl phosphate. Tetramer of heterodimers (alpha,beta)4. The cofactor is Mg(2+). It depends on Mn(2+) as a cofactor.

It catalyses the reaction hydrogencarbonate + L-glutamine + 2 ATP + H2O = carbamoyl phosphate + L-glutamate + 2 ADP + phosphate + 2 H(+). The enzyme catalyses hydrogencarbonate + NH4(+) + 2 ATP = carbamoyl phosphate + 2 ADP + phosphate + 2 H(+). Its pathway is amino-acid biosynthesis; L-arginine biosynthesis; carbamoyl phosphate from bicarbonate: step 1/1. It participates in pyrimidine metabolism; UMP biosynthesis via de novo pathway; (S)-dihydroorotate from bicarbonate: step 1/3. Its function is as follows. Large subunit of the glutamine-dependent carbamoyl phosphate synthetase (CPSase). CPSase catalyzes the formation of carbamoyl phosphate from the ammonia moiety of glutamine, carbonate, and phosphate donated by ATP, constituting the first step of 2 biosynthetic pathways, one leading to arginine and/or urea and the other to pyrimidine nucleotides. The large subunit (synthetase) binds the substrates ammonia (free or transferred from glutamine from the small subunit), hydrogencarbonate and ATP and carries out an ATP-coupled ligase reaction, activating hydrogencarbonate by forming carboxy phosphate which reacts with ammonia to form carbamoyl phosphate. The polypeptide is Carbamoyl phosphate synthase large chain (Methanothermobacter thermautotrophicus (strain ATCC 29096 / DSM 1053 / JCM 10044 / NBRC 100330 / Delta H) (Methanobacterium thermoautotrophicum)).